Consider the following 635-residue polypeptide: Threonine--tRNA ligase (635 aa).

The 61-residue stretch at 1–61 (MINISFPDGS…DNDCKLRILT (61 aa)) folds into the TGS domain. Positions 242–533 (DHRKLGRELD…LIEEYAGRFP (292 aa)) are catalytic. Residues Cys-333, His-384, and His-510 each contribute to the Zn(2+) site.

Belongs to the class-II aminoacyl-tRNA synthetase family. In terms of assembly, homodimer. The cofactor is Zn(2+).

The protein localises to the cytoplasm. The enzyme catalyses tRNA(Thr) + L-threonine + ATP = L-threonyl-tRNA(Thr) + AMP + diphosphate + H(+). Catalyzes the attachment of threonine to tRNA(Thr) in a two-step reaction: L-threonine is first activated by ATP to form Thr-AMP and then transferred to the acceptor end of tRNA(Thr). Also edits incorrectly charged L-seryl-tRNA(Thr). The sequence is that of Threonine--tRNA ligase from Rickettsia conorii (strain ATCC VR-613 / Malish 7).